A 430-amino-acid chain; its full sequence is Adenylosuccinate synthetase (430 aa).

Residues G12–K18 and G40–T42 each bind GTP. D13 serves as the catalytic Proton acceptor. Mg(2+) contacts are provided by D13 and G40. IMP contacts are provided by residues D13–K16, N38–H41, T130, R144, Q224, T239, and R303. The active-site Proton donor is the H41. T299–R305 lines the substrate pocket. GTP-binding positions include R305, K331 to D333, and S413 to S415.

This sequence belongs to the adenylosuccinate synthetase family. As to quaternary structure, homodimer. Mg(2+) serves as cofactor.

It localises to the cytoplasm. It carries out the reaction IMP + L-aspartate + GTP = N(6)-(1,2-dicarboxyethyl)-AMP + GDP + phosphate + 2 H(+). Its pathway is purine metabolism; AMP biosynthesis via de novo pathway; AMP from IMP: step 1/2. Its function is as follows. Plays an important role in the de novo pathway of purine nucleotide biosynthesis. Catalyzes the first committed step in the biosynthesis of AMP from IMP. In Rhodopseudomonas palustris (strain BisB5), this protein is Adenylosuccinate synthetase.